A 1091-amino-acid polypeptide reads, in one-letter code: ATP-dependent RNA helicase ddx54 (1091 aa).

2 disordered regions span residues 1–63 (MVKP…KEEF) and 150–231 (DNSN…KTGG). Residues 26-35 (MKGKKLETKS) show a composition bias toward basic and acidic residues. Residues 150 to 161 (DNSNFDNNGDQF) are compositionally biased toward polar residues. Positions 196-207 (KKEEIESSEKFE) are enriched in basic and acidic residues. The Q motif signature appears at 230 to 258 (GGFQSMDLTKNLLKAILKKGFNVPTPIQR). The Helicase ATP-binding domain occupies 261–433 (IPMILDGHDI…RAGLNNPKLI (173 aa)). 274 to 281 (ARTGSGKT) contributes to the ATP binding site. The DEAD box motif lies at 381-384 (DEAD). One can recognise a Helicase C-terminal domain in the interval 478–632 (TETTTTTTTN…KFQYEGQTIN (155 aa)). Disordered regions lie at residues 801–896 (EEML…TPEN) and 933–1091 (KRKG…KSRK). The span at 814–823 (DNNKDIKMNE) shows a compositional bias: basic and acidic residues. Over residues 824-855 (NDDENDDDDEEGENDDDEEEENEKDEDDEEDE) the composition is skewed to acidic residues. Composition is skewed to basic and acidic residues over residues 865–874 (ESSDKNDNNK), 944–975 (DADRKNSKKLVRNEAGKLVEAKKSHKGYEEWK), and 1008–1019 (QGREKEKKDNKA). Residues 1020–1029 (SHAKGSHGLK) are compositionally biased toward basic residues. The segment covering 1031–1052 (RPSELKDKNQISKNRSEKERKM) has biased composition (basic and acidic residues). Residues 1068-1079 (SGGGGGGKGSKF) show a composition bias toward gly residues.

This sequence belongs to the DEAD box helicase family. DDX54/DBP10 subfamily.

The protein resides in the nucleus. It localises to the nucleolus. It catalyses the reaction ATP + H2O = ADP + phosphate + H(+). ATP-binding RNA helicase which may be involved in the ribosome biogenesis. This chain is ATP-dependent RNA helicase ddx54 (helA), found in Dictyostelium discoideum (Social amoeba).